The following is a 592-amino-acid chain: V-type ATP synthase alpha chain (592 aa).

233-240 provides a ligand contact to ATP; that stretch reads GPFGSGKT.

Belongs to the ATPase alpha/beta chains family.

It catalyses the reaction ATP + H2O + 4 H(+)(in) = ADP + phosphate + 5 H(+)(out). Produces ATP from ADP in the presence of a proton gradient across the membrane. The V-type alpha chain is a catalytic subunit. This chain is V-type ATP synthase alpha chain, found in Clostridium botulinum (strain Okra / Type B1).